Here is a 307-residue protein sequence, read N- to C-terminus: Ribonuclease Z (307 aa).

His-63, His-65, Asp-67, His-68, His-141, Asp-212, and His-270 together coordinate Zn(2+). Asp-67 (proton acceptor) is an active-site residue.

Belongs to the RNase Z family. Homodimer. Zn(2+) serves as cofactor.

It carries out the reaction Endonucleolytic cleavage of RNA, removing extra 3' nucleotides from tRNA precursor, generating 3' termini of tRNAs. A 3'-hydroxy group is left at the tRNA terminus and a 5'-phosphoryl group is left at the trailer molecule.. In terms of biological role, zinc phosphodiesterase, which displays some tRNA 3'-processing endonuclease activity. Probably involved in tRNA maturation, by removing a 3'-trailer from precursor tRNA. In Bacillus cereus (strain ATCC 10987 / NRS 248), this protein is Ribonuclease Z.